The following is a 224-amino-acid chain: Envelope glycoprotein L (224 aa).

An N-terminal signal peptide occupies residues 1 to 16; it reads MGFVCLFGLVVMGAWG. The interval 20–161 is interaction with gH; it reads GSQATEYVLR…FDYSRTRRCV (142 aa). The region spanning 23–201 is the gL alphaherpesvirus-type domain; sequence ATEYVLRSVI…LATQPPVLAL (179 aa). 2 disulfides stabilise this stretch: C44-C76 and C149-C160. The tract at residues 168–224 is disordered; it reads PANTTSTWEPPVSSDDEASSQSKPLATQPPVLALSNAPPRRVSPTRGRRRHTRLRRN. Residues 213–224 show a composition bias toward basic residues; sequence RGRRRHTRLRRN.

Belongs to the herpesviridae glycoprotein L (gL) family. Alphaherpesvirinae gL subfamily. In terms of assembly, interacts with glycoprotein H (gH); this interaction is necessary for the correct processing and cell surface expression of gH. The heterodimer gH/gL seems to interact with gB trimers during fusion.

The protein localises to the virion membrane. It is found in the host cell membrane. The protein resides in the host Golgi apparatus. It localises to the host trans-Golgi network. Functionally, the heterodimer glycoprotein H-glycoprotein L is required for the fusion of viral and plasma membranes leading to virus entry into the host cell. Acts as a functional inhibitor of gH and maintains gH in an inhibited form. Upon binding to host integrins, gL dissociates from gH leading to activation of the viral fusion glycoproteins gB and gH. The protein is Envelope glycoprotein L of Homo sapiens (Human).